The primary structure comprises 149 residues: Urease accessory protein UreE (149 aa).

The protein belongs to the UreE family.

It localises to the cytoplasm. Involved in urease metallocenter assembly. Binds nickel. Probably functions as a nickel donor during metallocenter assembly. This is Urease accessory protein UreE from Synechococcus sp. (strain JA-3-3Ab) (Cyanobacteria bacterium Yellowstone A-Prime).